Reading from the N-terminus, the 868-residue chain is Coatomer subunit gamma (868 aa).

Over residues 1 to 11 (MWRTKRGRTRR) the composition is skewed to basic residues. The tract at residues 1–22 (MWRTKRGRTRRRDAGGNPWQNL) is disordered. HEAT repeat units lie at residues 64–101 (REATECFFAMTKLFQSKDVVMRRMVYLGIKELSPIADD), 287–324 (RELSTAVSILQLFCGSSKATLRFAAVRTMNKVAMLHPP), 326–359 (VNVCNLDLEGLIADSNRSVATLAITTLLKTGAES), and 360–396 (SVERLMKQIATFVAEISDEFKLVVVQAIRSLCTKFPR).

The protein belongs to the COPG family. In terms of assembly, oligomeric complex that consists of at least the alpha, beta, beta', gamma, delta, epsilon and zeta subunits.

The protein localises to the cytoplasm. It is found in the golgi apparatus membrane. The protein resides in the cytoplasmic vesicle. Its subcellular location is the COPI-coated vesicle membrane. It localises to the endoplasmic reticulum. Its function is as follows. The coatomer is a cytosolic protein complex that binds to dilysine motifs and reversibly associates with Golgi non-clathrin-coated vesicles, which further mediate biosynthetic protein transport from the ER, via the Golgi up to the trans Golgi network. Coatomer complex is required for budding from Golgi membranes, and is essential for the retrograde Golgi-to-ER transport of dilysine-tagged proteins. The polypeptide is Coatomer subunit gamma (Anopheles gambiae (African malaria mosquito)).